The chain runs to 1070 residues: DNA-directed RNA polymerase subunit beta (1070 aa).

This sequence belongs to the RNA polymerase beta chain family. In plastids the minimal PEP RNA polymerase catalytic core is composed of four subunits: alpha, beta, beta', and beta''. When a (nuclear-encoded) sigma factor is associated with the core the holoenzyme is formed, which can initiate transcription.

The protein localises to the plastid. It is found in the chloroplast. The enzyme catalyses RNA(n) + a ribonucleoside 5'-triphosphate = RNA(n+1) + diphosphate. In terms of biological role, DNA-dependent RNA polymerase catalyzes the transcription of DNA into RNA using the four ribonucleoside triphosphates as substrates. The chain is DNA-directed RNA polymerase subunit beta from Populus trichocarpa (Western balsam poplar).